Reading from the N-terminus, the 151-residue chain is Ribosomal RNA large subunit methyltransferase H (151 aa).

S-adenosyl-L-methionine contacts are provided by residues Gly-100 and 119-124 (LSKMTF).

The protein belongs to the RNA methyltransferase RlmH family. As to quaternary structure, homodimer.

Its subcellular location is the cytoplasm. It catalyses the reaction pseudouridine(1915) in 23S rRNA + S-adenosyl-L-methionine = N(3)-methylpseudouridine(1915) in 23S rRNA + S-adenosyl-L-homocysteine + H(+). Functionally, specifically methylates the pseudouridine at position 1915 (m3Psi1915) in 23S rRNA. The polypeptide is Ribosomal RNA large subunit methyltransferase H (Thermotoga sp. (strain RQ2)).